Reading from the N-terminus, the 376-residue chain is Glutamate 5-kinase (376 aa).

Residue Lys-23 participates in ATP binding. The substrate site is built by Ser-63, Asp-150, and Asn-162. ATP-binding positions include 182 to 183 and 222 to 228; these read SD and TGGMASK. The PUA domain maps to 284–358; it reads GGALRIDAGA…GKQTAQLPEG (75 aa).

Belongs to the glutamate 5-kinase family.

Its subcellular location is the cytoplasm. It carries out the reaction L-glutamate + ATP = L-glutamyl 5-phosphate + ADP. It participates in amino-acid biosynthesis; L-proline biosynthesis; L-glutamate 5-semialdehyde from L-glutamate: step 1/2. Catalyzes the transfer of a phosphate group to glutamate to form L-glutamate 5-phosphate. This is Glutamate 5-kinase from Corynebacterium diphtheriae (strain ATCC 700971 / NCTC 13129 / Biotype gravis).